A 1749-amino-acid polypeptide reads, in one-letter code: Intraflagellar transport protein 172 homolog (1749 aa).

An N-acetylmethionine modification is found at Met1. Lys4 is covalently cross-linked (Glycyl lysine isopeptide (Lys-Gly) (interchain with G-Cter in SUMO1)). WD repeat units follow at residues 14–53 (DGAAKVTCMAWSQNNAKFAVCTVDRVVLLYDEHGERRDKF), 64–103 (RKSYMVKGMAFSPDSTKIAIGQTDNIIYVYKIGEDWGDKK), 110–148 (IQTSAVTCLQWPAEYVIVFGLAEGKVRLANTKTNKSSTI), 150–191 (GTES…ESQG), 195–233 (NHPCPPYALAWATNSIVAAGCDRRIVAYGKEGHVLQTFD), 238–278 (PQER…WEEA), 284–323 (ANLYTVTALAWKRDGSRLCAGTLCGGVEQFDCCLRRSIYK), 483–520 (SHESRVDWLELNETGHKLLFRDRKLRLHLYDIESCSKT), and 521–559 (MILNFCSYVQWVPGSDVLVAQNRNSLCVWYNIEAPERVT). A TPR 1 repeat occupies 593 to 624 (DEGLIEFGTAIDDGNYTRATAFLETLEMTPET). Arg672 is subject to Omega-N-methylarginine. TPR repeat units lie at residues 692–725 (EKNYKLAEMIFLEQNAVEEAMDMYQELHRWEECI), 809–842 (GELYERAGDLFEKIRNPQRALECYCKGNAFMKAV), 854–887 (VRLEEAWGDHLVQQKQLDAAINHYIEARCSIKAI), 912–945 (SKYYPRVAQHYASLQEYEIAEELYTKGDRTKDAI), 947–970 (MYTQAGRWEQAHKLAMKCMRPEDV), 971–1004 (SVLYITQAQEMEKQGKYREAERLYVTVEEPDLAI), 1042–1075 (EGRLQEAEYHYLEAQEWKATVNMYRSSGLWEEAY), 1142–1175 (PEIHLKYAMYLEDEGKFEEAEAEFIRAGKPKEAV), 1276–1309 (VEGLVEQARQWEQAGEYSRAVDCYLKVRDSGSSG), 1345–1378 (IGKHSAAAELYLNLDLVKEAIDAFIEGEEWNKAK), 1411–1445 (GVDVVAALDLYVEQGQWDKCIETATKQNYKILHKY), 1447–1477 (ALYATHLIREGGYAQALALYVQHGAPANPQN), and 1574–1607 (DKAFYEAGTAAKEVGWENMAFIFLNRFLDLTDAI).

The protein belongs to the IFT172 family. As to quaternary structure, interacts with IFT88. Interacts with IFT57. Interacts with RABL2/RABL2A; binds preferentially to GDP-bound RABL2. As to expression, co-localizes with RABL2/RABL2A in the midpiece of elongated spermatids within the testis (at protein level). Expressed in the flagellum of elongated spermatids and sperm in the testis lumen (at protein level).

The protein resides in the cell projection. The protein localises to the cilium. Required for the maintenance and formation of cilia. Plays an indirect role in hedgehog (Hh) signaling, cilia being required for all activity of the hedgehog pathway. The chain is Intraflagellar transport protein 172 homolog (Ift172) from Mus musculus (Mouse).